We begin with the raw amino-acid sequence, 109 residues long: uncharacterized protein (109 aa).

It is found in the mitochondrion. This is an uncharacterized protein from Arabidopsis thaliana (Mouse-ear cress).